The sequence spans 531 residues: Outer dynein arm-docking complex subunit 4 (531 aa).

3 TPR repeats span residues 15–48 (FSTY…QPEE), 50–82 (NCLV…ENDF), and 83–116 (FKGL…RPEF). The interval 161–185 (KQKAQVKVQKKDSKQQKKVDPERSQ) is disordered. Basic and acidic residues predominate over residues 169–185 (QKKDSKQQKKVDPERSQ). 5 TPR repeats span residues 275–307 (VKSL…VERW), 320–353 (GSLH…AEKY), 360–393 (SRAL…ANSS), 397–430 (TWLY…ADAA), and 437–470 (LNAC…ARLL). The tract at residues 487 to 531 (KQGMEEQQESEQNNDENDNLRADGNTARDEEEEDVHVQRTEEDEG) is disordered. The span at 492–503 (EQQESEQNNDEN) shows a compositional bias: acidic residues. A compositionally biased stretch (basic and acidic residues) spans 521–531 (VHVQRTEEDEG).

In terms of assembly, component of the outer dynein arm-docking complex. As to expression, in the mucociliary epithelium, specifically expressed in ciliated cells.

Its subcellular location is the cytoplasm. The protein localises to the cytoskeleton. It localises to the cilium axoneme. In terms of biological role, component of the outer dynein arm-docking complex (ODA-DC) that mediates outer dynein arms (ODA) binding onto the doublet microtubule. Plays an essential role for the assembly of ODA-DC and in the docking of ODA in ciliary axoneme. Functionally, required for the docking of the outer dynein arm to cilia, hence plays an essential role in cilia motility. The protein is Outer dynein arm-docking complex subunit 4 (odad4) of Xenopus laevis (African clawed frog).